The sequence spans 164 residues: SsrA-binding protein (164 aa).

Residues 141–164 (KLHDKRQDEKQKSIKKEINSALKR) form a disordered region. Basic and acidic residues predominate over residues 145–158 (KRQDEKQKSIKKEI).

It belongs to the SmpB family.

It localises to the cytoplasm. Functionally, required for rescue of stalled ribosomes mediated by trans-translation. Binds to transfer-messenger RNA (tmRNA), required for stable association of tmRNA with ribosomes. tmRNA and SmpB together mimic tRNA shape, replacing the anticodon stem-loop with SmpB. tmRNA is encoded by the ssrA gene; the 2 termini fold to resemble tRNA(Ala) and it encodes a 'tag peptide', a short internal open reading frame. During trans-translation Ala-aminoacylated tmRNA acts like a tRNA, entering the A-site of stalled ribosomes, displacing the stalled mRNA. The ribosome then switches to translate the ORF on the tmRNA; the nascent peptide is terminated with the 'tag peptide' encoded by the tmRNA and targeted for degradation. The ribosome is freed to recommence translation, which seems to be the essential function of trans-translation. This chain is SsrA-binding protein, found in Prochlorococcus marinus (strain AS9601).